Consider the following 552-residue polypeptide: Non-structural protein NS1 (552 aa).

The protein belongs to the orbivirus non-structural protein NS1 family.

In Epizootic hemorrhagic disease virus 2 (strain Alberta) (EHDV-2), this protein is Non-structural protein NS1 (Segment-5).